Reading from the N-terminus, the 123-residue chain is Polyadenylate-binding protein-interacting protein 2B (123 aa).

At Met1 the chain carries N-acetylmethionine. Over residues 1 to 13 (MNGSNMANTSPSV) the composition is skewed to polar residues. 2 disordered regions span residues 1-30 (MNGSNMANTSPSVKSKEDQGLSGHDEKENP) and 91-123 (NGLSVSEGHDSEDILSKSNLNPDAKEFIPGEKY). 2 stretches are compositionally biased toward basic and acidic residues: residues 14-30 (KSKEDQGLSGHDEKENP) and 113-123 (DAKEFIPGEKY).

This sequence belongs to the PAIP2 family. As to quaternary structure, interacts (via central acidic portion and C-terminus) with PABPC1 (via the second and third RRM domains and the C-terminus). Post-translationally, ubiquitinated in vitro. Expressed in brain, cervix, heart, liver, ovary, kidney, prostate and testis.

Inhibits translation of capped and polyadenylated mRNAs by displacing PABPC1 from the poly(A) tail. This chain is Polyadenylate-binding protein-interacting protein 2B (PAIP2B), found in Homo sapiens (Human).